A 181-amino-acid chain; its full sequence is DNA-packaging protein NU1 homolog (181 aa).

This sequence to phage lambda DNA packaging protein NU1.

This is DNA-packaging protein NU1 homolog (nohD) from Escherichia coli (strain K12).